We begin with the raw amino-acid sequence, 3799 residues long: Polyketide synthase GfsE (3799 aa).

The 427-residue stretch at 33-459 (HEPIAIIGMS…GTNAHAILEE (427 aa)) folds into the Ketosynthase family 3 (KS3) 1 domain. 2 module regions span residues 33–1730 (HEPI…RSSA) and 1749–3494 (DEAI…RTDL). Catalysis depends on for beta-ketoacyl synthase 1 activity residues C206, H341, and H381. Positions 462-496 (AATGNPTEADTDQEPAASASPDRTTTLPAVPWPLS) are disordered. The 314-residue stretch at 582 to 895 (FVFPGQGSQW…LGEAHAHGAD (314 aa)) folds into the Malonyl-CoA:ACP transacylase (MAT) 1 domain. Residues 944-1069 (HPLFGAVVEV…GVLELEARPE (126 aa)) form an N-terminal hotdog fold 1 region. Residues 944-1222 (HPLFGAVVEV…SRPVAEEQLG (279 aa)) enclose the PKS/mFAS DH 1 domain. The active-site Proton acceptor; for dehydratase activity 1 is H976. The segment at 1081–1222 (AEVVPVEGLY…SRPVAEEQLG (142 aa)) is C-terminal hotdog fold 1. Catalysis depends on D1142, which acts as the Proton donor; for dehydratase activity 1. The Ketoreductase (KR) 1 domain maps to 1382-1554 (LLVTGASGVL…TSLSWGLWAE (173 aa)). The Carrier 1 domain maps to 1652–1730 (EAERAVLELV…ALATHIRSSA (79 aa)). Position 1690 is an O-(pantetheine 4'-phosphoryl)serine (S1690). The Ketosynthase family 3 (KS3) 2 domain occupies 1749–2174 (DEAIAIVGMA…GTNAHVILEQ (426 aa)). Catalysis depends on for beta-ketoacyl synthase 2 activity residues C1921, H2056, and H2096. Residues 2284-2604 (FVFPGQGSQW…VSLAKVHTHG (321 aa)) form the Malonyl-CoA:ACP transacylase (MAT) 2 domain. Residues 2656–2781 (HPLLTGVVDL…GTLAVDADHD (126 aa)) are N-terminal hotdog fold 2. The PKS/mFAS DH 2 domain maps to 2656–2936 (HPLLTGVVDL…TRPVTAAQFA (281 aa)). The active-site Proton acceptor; for dehydratase activity 2 is H2688. The C-terminal hotdog fold 2 stretch occupies residues 2794–2936 (ADPVDLTEVY…TRPVTAAQFA (143 aa)). Residue D2855 is the Proton donor; for dehydratase activity 2 of the active site. In terms of domain architecture, Ketoreductase (KR) 2 spans 3142 to 3314 (LLVTGASGVL…TALSWGLWAE (173 aa)). Residues 3419 to 3494 (AALLDLVGAQ…ALAAQLRTDL (76 aa)) form the Carrier 2 domain. O-(pantetheine 4'-phosphoryl)serine is present on S3454.

Requires pantetheine 4'-phosphate as cofactor.

It functions in the pathway antibiotic biosynthesis. Functionally, fifth protein in the synthesis of the 16-membered macrolide antibiotics FD-891 and FD-892. Composed of 2 modules. Modifies the product of GfsD by multiple rounds of addition of methylmalonyl-CoA and other modifications to help generate the final products. The chain is Polyketide synthase GfsE from Streptomyces halstedii.